The chain runs to 108 residues: UPF0102 protein Sama_3355 (108 aa).

It belongs to the UPF0102 family.

This chain is UPF0102 protein Sama_3355, found in Shewanella amazonensis (strain ATCC BAA-1098 / SB2B).